The chain runs to 485 residues: UDP-glycosyltransferase 91D1 (485 aa).

Residues Ser-296, 355-356, 373-381, and 395-398 each bind UDP-alpha-D-glucose; these read WA, HCGSGSIVE, and FCDQ.

The protein belongs to the UDP-glycosyltransferase family.

May glycosylate diterpenes or flavonols in leaves. The sequence is that of UDP-glycosyltransferase 91D1 from Stevia rebaudiana (Stevia).